The sequence spans 29 residues: Cytochrome b6-f complex subunit 8 (29 aa).

A helical membrane pass occupies residues Ile3–Val23.

This sequence belongs to the PetN family. In terms of assembly, the 4 large subunits of the cytochrome b6-f complex are cytochrome b6, subunit IV (17 kDa polypeptide, PetD), cytochrome f and the Rieske protein, while the 4 small subunits are PetG, PetL, PetM and PetN. The complex functions as a dimer.

The protein resides in the cellular thylakoid membrane. Component of the cytochrome b6-f complex, which mediates electron transfer between photosystem II (PSII) and photosystem I (PSI), cyclic electron flow around PSI, and state transitions. In Gloeothece citriformis (strain PCC 7424) (Cyanothece sp. (strain PCC 7424)), this protein is Cytochrome b6-f complex subunit 8.